We begin with the raw amino-acid sequence, 157 residues long: SsrA-binding protein (157 aa).

Belongs to the SmpB family.

The protein resides in the cytoplasm. Functionally, required for rescue of stalled ribosomes mediated by trans-translation. Binds to transfer-messenger RNA (tmRNA), required for stable association of tmRNA with ribosomes. tmRNA and SmpB together mimic tRNA shape, replacing the anticodon stem-loop with SmpB. tmRNA is encoded by the ssrA gene; the 2 termini fold to resemble tRNA(Ala) and it encodes a 'tag peptide', a short internal open reading frame. During trans-translation Ala-aminoacylated tmRNA acts like a tRNA, entering the A-site of stalled ribosomes, displacing the stalled mRNA. The ribosome then switches to translate the ORF on the tmRNA; the nascent peptide is terminated with the 'tag peptide' encoded by the tmRNA and targeted for degradation. The ribosome is freed to recommence translation, which seems to be the essential function of trans-translation. The sequence is that of SsrA-binding protein from Clostridium kluyveri (strain NBRC 12016).